Consider the following 107-residue polypeptide: Nucleoid-associated protein Daro_0807 (107 aa).

The protein belongs to the YbaB/EbfC family. Homodimer.

It is found in the cytoplasm. The protein localises to the nucleoid. Binds to DNA and alters its conformation. May be involved in regulation of gene expression, nucleoid organization and DNA protection. The polypeptide is Nucleoid-associated protein Daro_0807 (Dechloromonas aromatica (strain RCB)).